The sequence spans 1283 residues: MAEHKNGVATNGYEKKSSPASSSTKSEAKPLPNGDKKDGIVKSFKQLRVASKRPLPKEMGDGSYRVVENRPGLKQDIRRLRGRDLKTLLEIVKAKVKGETQQDDKTMIMERTIQLVANLSDHSKVQESLTNSFISQLWNSIDHPPMLYMGDKFRFRQPDGSNNNPYLPQLGAARTPYSRTVRPKGMSLGAQPDPEAIFESVFARDAFRKNPNNVSSILWYWATIIIHDLFWTNLQDPNQNDSSSYLDLAPLYGSTEKDRDSIRTFKDGQLKPDCFADKRLIGNPPGVPILLIMFNRFHNHVATNLADINEGGRFSKPAEHLSPEAADAAWKKRDTELFETARLVTSGLYINITLIDYVRNIINLNRVDTTWTLDPRQEMGVSVGTKDLSESGTGNVVSAEFNLCYRWHSCLSEMDDKWVQDFYTELLGENYGPMNLQTMMKALKAFEASVADEPSERTFGGFKRGPDGKFNDDELVEALATAIEQPGGAFGGRNVPRIMKPIEMLGIMRGRKWNLAGLNEFRKHFGLKAYETFEDINSDPSVADALRNLYQHPDYVELYPGIVAEEAKTPMVPGVGIAPTYTISRVVLSDAVALVRGDRYYTTDYNPRHLTNWGYKEVDYDLKVNHGCVFYKLFLRAFPQHFKGNSVYAHYPMVIPSENKKILTNIKRADRFDFSRPEPTATRINIIGYNAAKYILEDQQKYRVCWEEGLKHLMGEAGGRFMLSGDTALHAQQRKCMGKLLYNDTWRNAVKSFYATTAEKLLAEKSYRLAGKMQVDVVRDVGNVAHTHFVARMFNLPLKTSENPKGVFSEQELYMILAVIFVCIFFDIDPAKSFPLRQGAREVAQKLGGIIEMNVKLANSIGVKGLFTSKPDKNDDPLARYGENMAKGLKKAGLSTEDIVWSQILPTAGAMVPNQAQVFAQTLDWYLSPAGEKYRPELARIAALETGDETDALLLGYAMEGIRMAGTFGLYREATGPDTIHEDDGRSIPVNAGDRVFVSFVQAAQDPKIFPNPGVVDPKRPLDKYIHYGVGPHACLGRDISQVALTELFRAVFRKKGVRRVPGAQGELKKVPRPGGFFVYMTEDWGSIWPFPTSMKITWDDGCGTDLFTLLFWCRSVPWWDLLPETTQAAPFIISSFQSQQIYSPAEIAAVLALMAFESGDFQYKRNHYPGRPGQGTANMQMPNYNLLYAKSIPELAKGWQGIESVEGLSDQELGDLLDDVTVDKYNFGSGPWFLKTQCKEDVRQAFKTDVDTGFQKYIEECVGTDLQPRLEYFQRAKTAFGL.

Residues 1-64 form a disordered region; sequence MAEHKNGVAT…LPKEMGDGSY (64 aa). A fatty acid alpha-dioxygenase region spans residues 130-476; it reads TNSFISQLWN…DGKFNDDELV (347 aa). His-227 provides a ligand contact to heme b. Residue Tyr-405 is part of the active site. His-408 contacts heme b. The tract at residues 684-1108 is epoxy alcohol synthase; that stretch reads INIIGYNAAK…WDDGCGTDLF (425 aa). Cys-1035 lines the heme pocket.

The protein in the N-terminal section; belongs to the peroxidase family. It in the C-terminal section; belongs to the cytochrome P450 family. Homotetramer. Heme b serves as cofactor. Requires heme as cofactor.

The catalysed reaction is (9Z,12Z)-octadecadienoate + O2 = (8E,10R,12Z)-10-hydroperoxyoctadeca-8,12-dienoate. It catalyses the reaction (8E,10R,12Z)-10-hydroperoxyoctadeca-8,12-dienoate = (12S,13R)-epoxy-(10R)-hydroxy-(8E)-octadecenoate. It carries out the reaction (9Z)-octadecenoate + O2 = (8R)-hydroperoxy-(9Z)-octadecenoate. Bifunctional dioxygenase (DOX)-epoxy alcohol synthase (EAS) that converts linoleic acid (18:2n-6) sequentially to 10(R)-hydroperoxy-8(E),12(Z)-octadecadienoic acid (10R-HPODE) and 10R-HPODE further to 12(13)-epoxy-10-hydroxy-8(E)-octa-decenoic acid as the end product. Linoleic acid is oxidized mainly to the R stereoisomer of 10-HPODE. The dioxygenase domain is also able to oygenate position C-8 of linoleic acid to produce 8(R)-hydroperoxy-8(E),12(Z)-octadecadienoic acid (8R-HPODE). This Fusarium oxysporum (strain Fo5176) (Fusarium vascular wilt) protein is Bifunctional dioxygenase (DOX)-epoxy alcohol synthase (EAS).